Consider the following 907-residue polypeptide: Leucine-rich repeat-containing G-protein coupled receptor 5 (907 aa).

The N-terminal stretch at 1-21 (MDTSRVRMLLSLLALLQLVAA) is a signal peptide. The Extracellular segment spans residues 22–561 (GSPPRPDTMP…EHLFGSWLIR (540 aa)). Residues 33-64 (GCPSYCHCELDGRMLLRVDCSDLGLSELPSNL) form the LRRNT domain. Cystine bridges form between C34–C40 and C38–C52. 17 LRR repeats span residues 44–64 (GRML…PSNL), 65–88 (SVFT…LLHR), 89–112 (LRFL…AFAG), 114–136 (HSLK…ALQN), 137–160 (LRSL…CFSG), 162–184 (HSLR…AFRS), 186–208 (SALQ…AFGN), 209–232 (LSSL…CFDG), 233–256 (LHSL…IKTL), 257–279 (SNLK…AFVG), 281–303 (PSLI…AFQH), 304–327 (LPEL…LTGT), 328–350 (ATLE…VCDQ), 351–375 (LPNL…GCQK), 377–396 (QKID…TFQQ), 397–420 (LFNL…AFST), and 422–444 (PSLI…GLHG). Residues N63 and N77 are each glycosylated (N-linked (GlcNAc...) asparagine). A glycan (N-linked (GlcNAc...) asparagine) is linked at N208. An intrachain disulfide couples C348 to C373. C479 and C541 are oxidised to a cystine. A helical membrane pass occupies residues 562–582 (IGVWTTAVLALSCNALVAFTV). The stretch at 564–585 (VWTTAVLALSCNALVAFTVFRT) is one LRR 18 repeat. Residues 583–595 (FRTPLYISSIKLL) are Cytoplasmic-facing. A helical transmembrane segment spans residues 596-616 (IGVIAVVDILMGVSSAILAVV). Topologically, residues 617-638 (DTFTFGSFAQHGAWWEGGIGCQ) are extracellular. C637 and C712 are joined by a disulfide. Residues 639–659 (IVGFLSIFASESSVFLLTLAA) form a helical membrane-spanning segment. Over 660-682 (LERGFSVKCSSKFEMKAPLSSLK) the chain is Cytoplasmic. A helical transmembrane segment spans residues 683-703 (AIILLCVLLALTIATVPLLGG). Residues 704-723 (SEYNASPLCLPLPFGEPSTT) lie on the Extracellular side of the membrane. Residues 724–744 (GYMVALVLLNSLCFLIMTIAY) traverse the membrane as a helical segment. At 745–775 (TRLYCSLEKGELENLWDCSMVKHTALLLFTN) the chain is on the cytoplasmic side. Residues 776–796 (CILYCPVAFLSFSSLLNLTFI) traverse the membrane as a helical segment. Residues 797–802 (SPEVIK) lie on the Extracellular side of the membrane. A helical membrane pass occupies residues 803–823 (FILLVIVPLPACLNPLLYIVF). The Cytoplasmic segment spans residues 824-907 (NPHFKEDMGS…LSSVAFVPCL (84 aa)).

The protein belongs to the G-protein coupled receptor 1 family. Identified in a complex composed of RNF43, LGR5 and RSPO1. Also interacts with other R-spondin ligands, including RSPO2, RSPO3 and RSPO4.

It is found in the cell membrane. The protein localises to the golgi apparatus. It localises to the trans-Golgi network membrane. Its function is as follows. Receptor for R-spondins that potentiates the canonical Wnt signaling pathway and acts as a stem cell marker of the intestinal epithelium and the hair follicle. Upon binding to R-spondins (RSPO1, RSPO2, RSPO3 or RSPO4), associates with phosphorylated LRP6 and frizzled receptors that are activated by extracellular Wnt receptors, triggering the canonical Wnt signaling pathway to increase expression of target genes. In contrast to classical G-protein coupled receptors, does not activate heterotrimeric G-proteins to transduce the signal. Involved in the development and/or maintenance of the adult intestinal stem cells during postembryonic development. This is Leucine-rich repeat-containing G-protein coupled receptor 5 (Lgr5) from Rattus norvegicus (Rat).